We begin with the raw amino-acid sequence, 180 residues long: Adenine phosphoribosyltransferase (180 aa).

It belongs to the purine/pyrimidine phosphoribosyltransferase family. Homodimer.

It localises to the cytoplasm. It carries out the reaction AMP + diphosphate = 5-phospho-alpha-D-ribose 1-diphosphate + adenine. The protein operates within purine metabolism; AMP biosynthesis via salvage pathway; AMP from adenine: step 1/1. In terms of biological role, catalyzes a salvage reaction resulting in the formation of AMP, that is energically less costly than de novo synthesis. The chain is Adenine phosphoribosyltransferase from Mycoplasma genitalium (strain ATCC 33530 / DSM 19775 / NCTC 10195 / G37) (Mycoplasmoides genitalium).